Here is a 219-residue protein sequence, read N- to C-terminus: 3,4-dihydroxy-2-butanone 4-phosphate synthase (219 aa).

D-ribulose 5-phosphate-binding positions include 37-38 (RE), aspartate 42, 150-154 (RRGHT), and glutamate 174. Residue glutamate 38 participates in Mg(2+) binding. Residue histidine 153 coordinates Mg(2+).

Belongs to the DHBP synthase family. As to quaternary structure, homodimer. The cofactor is Mg(2+). Mn(2+) is required as a cofactor.

The catalysed reaction is D-ribulose 5-phosphate = (2S)-2-hydroxy-3-oxobutyl phosphate + formate + H(+). It participates in cofactor biosynthesis; riboflavin biosynthesis; 2-hydroxy-3-oxobutyl phosphate from D-ribulose 5-phosphate: step 1/1. Its function is as follows. Catalyzes the conversion of D-ribulose 5-phosphate to formate and 3,4-dihydroxy-2-butanone 4-phosphate. This Edwardsiella ictaluri (strain 93-146) protein is 3,4-dihydroxy-2-butanone 4-phosphate synthase.